Consider the following 299-residue polypeptide: Probable transport accessory protein MmpS3 (299 aa).

Positions 1 to 72 (MSGPNPPGRE…EHVTGGPYVP (72 aa)) are disordered. A helical membrane pass occupies residues 101 to 121 (VVGVAAIIAAVALVVSVSLLV). Residues 128–139 (KLATGDTTSSAP) are compositionally biased toward polar residues. Residues 128-213 (KLATGDTTSS…TTTTPTGPRQ (86 aa)) form a disordered region. Residues 150–163 (PAPPPPPPAPPPTT) are compositionally biased toward pro residues. A compositionally biased stretch (low complexity) spans 164–176 (EIPTATETQTVTV). Positions 177–193 (TPPPPPPPATTTAPPPA) are enriched in pro residues.

It belongs to the MmpS family.

The protein resides in the cell membrane. The protein is Probable transport accessory protein MmpS3 (mmpS3) of Mycobacterium tuberculosis (strain CDC 1551 / Oshkosh).